The following is a 235-amino-acid chain: Hydroxyacylglutathione hydrolase (235 aa).

7 residues coordinate Zn(2+): His53, His55, Asp57, His58, His109, Asp127, and His165.

This sequence belongs to the metallo-beta-lactamase superfamily. Glyoxalase II family. As to quaternary structure, monomer. Zn(2+) is required as a cofactor.

The enzyme catalyses an S-(2-hydroxyacyl)glutathione + H2O = a 2-hydroxy carboxylate + glutathione + H(+). Its pathway is secondary metabolite metabolism; methylglyoxal degradation; (R)-lactate from methylglyoxal: step 2/2. Functionally, thiolesterase that catalyzes the hydrolysis of S-D-lactoyl-glutathione to form glutathione and D-lactic acid. The polypeptide is Hydroxyacylglutathione hydrolase (Actinobacillus pleuropneumoniae serotype 7 (strain AP76)).